The sequence spans 234 residues: Glucosamine-6-phosphate deaminase (234 aa).

Aspartate 63 functions as the Proton acceptor; for enolization step in the catalytic mechanism. The For ring-opening step role is filled by asparagine 129. The active-site Proton acceptor; for ring-opening step is histidine 131. The For ring-opening step role is filled by glutamate 136.

It belongs to the glucosamine/galactosamine-6-phosphate isomerase family. NagB subfamily.

It catalyses the reaction alpha-D-glucosamine 6-phosphate + H2O = beta-D-fructose 6-phosphate + NH4(+). It participates in amino-sugar metabolism; N-acetylneuraminate degradation; D-fructose 6-phosphate from N-acetylneuraminate: step 5/5. Functionally, catalyzes the reversible isomerization-deamination of glucosamine 6-phosphate (GlcN6P) to form fructose 6-phosphate (Fru6P) and ammonium ion. In Listeria innocua serovar 6a (strain ATCC BAA-680 / CLIP 11262), this protein is Glucosamine-6-phosphate deaminase.